Reading from the N-terminus, the 363-residue chain is Actin-related protein 7 (363 aa).

At Met-1 the chain carries N-acetylmethionine.

It belongs to the actin family. Plant ARP7 subfamily. Mostly expressed in flowers, and, to a lower extent, in roots, seedlings, leaves and siliques (at protein level).

Its subcellular location is the nucleus. It is found in the cytoplasm. Its function is as follows. Essential protein required during embryogenesis and all plant development stages, probably through a chromatin-mediated regulation of gene expression. This is Actin-related protein 7 (ARP7) from Arabidopsis thaliana (Mouse-ear cress).